Reading from the N-terminus, the 150-residue chain is Soluble pyridine nucleotide transhydrogenase (150 aa).

Belongs to the class-I pyridine nucleotide-disulfide oxidoreductase family. The cofactor is FAD.

The protein resides in the cytoplasm. It catalyses the reaction NAD(+) + NADPH = NADH + NADP(+). Functionally, conversion of NADPH, generated by peripheral catabolic pathways, to NADH, which can enter the respiratory chain for energy generation. The sequence is that of Soluble pyridine nucleotide transhydrogenase (sthA) from Pectobacterium carotovorum subsp. carotovorum (Erwinia carotovora subsp. carotovora).